The primary structure comprises 156 residues: Small ribosomal subunit protein uS7 (156 aa).

Belongs to the universal ribosomal protein uS7 family. In terms of assembly, part of the 30S ribosomal subunit. Contacts proteins S9 and S11.

Its function is as follows. One of the primary rRNA binding proteins, it binds directly to 16S rRNA where it nucleates assembly of the head domain of the 30S subunit. Is located at the subunit interface close to the decoding center, probably blocks exit of the E-site tRNA. The polypeptide is Small ribosomal subunit protein uS7 (Haemophilus influenzae (strain 86-028NP)).